The sequence spans 121 residues: Fluoride-specific ion channel FluC 1 (121 aa).

A run of 4 helical transmembrane segments spans residues 3 to 23, 29 to 49, 67 to 87, and 92 to 112; these read YLYI…LSML, IPLG…SIGA, TGLL…VTLF, and FILF…SCYL. Na(+) is bound by residues G71 and T74.

The protein belongs to the fluoride channel Fluc/FEX (TC 1.A.43) family.

Its subcellular location is the cell membrane. It carries out the reaction fluoride(in) = fluoride(out). With respect to regulation, na(+) is not transported, but it plays an essential structural role and its presence is essential for fluoride channel function. Its function is as follows. Fluoride-specific ion channel. Important for reducing fluoride concentration in the cell, thus reducing its toxicity. The chain is Fluoride-specific ion channel FluC 1 from Staphylococcus epidermidis (strain ATCC 35984 / DSM 28319 / BCRC 17069 / CCUG 31568 / BM 3577 / RP62A).